The primary structure comprises 205 residues: MSKRETTKYKIDRRMGENIWGRPKSPVNRRDYGPGQHGQRRKGKLSDYGVQLRAKQKLKGFYGDISEKQFHKTYVEAARRRGDTGENLIGLLESRLDAVVYRAKFVPTIFASRQFINHGHVNVNGRRTNIQSYRCKPGDVIEVREKSKQLVLVLESVQLAERDVPDYIEADHKQMKATFTRIPAFADVPYAVQMEPNLVVEFYSR.

Residues 1-16 are compositionally biased toward basic and acidic residues; the sequence is MSKRETTKYKIDRRMG. The disordered stretch occupies residues 1–46; it reads MSKRETTKYKIDRRMGENIWGRPKSPVNRRDYGPGQHGQRRKGKLS. The S4 RNA-binding domain maps to 94 to 157; sequence SRLDAVVYRA…KQLVLVLESV (64 aa).

This sequence belongs to the universal ribosomal protein uS4 family. As to quaternary structure, part of the 30S ribosomal subunit. Contacts protein S5. The interaction surface between S4 and S5 is involved in control of translational fidelity.

Its function is as follows. One of the primary rRNA binding proteins, it binds directly to 16S rRNA where it nucleates assembly of the body of the 30S subunit. With S5 and S12 plays an important role in translational accuracy. This Bartonella tribocorum (strain CIP 105476 / IBS 506) protein is Small ribosomal subunit protein uS4.